The sequence spans 351 residues: ATP-dependent 6-phosphofructokinase subunit gamma (351 aa).

In terms of assembly, heterododecamer of 4 alpha, 4 beta and 4 gamma chains. The gamma chain bridges the N-terminal halves of the alpha and beta subunits.

It is found in the cytoplasm. Its pathway is carbohydrate degradation; glycolysis; D-glyceraldehyde 3-phosphate and glycerone phosphate from D-glucose: step 3/4. Its function is as follows. Structural subunit of pyrophosphate--fructose 6-phosphate 1-phosphotransferase. Not required for catalytic activity. Fine-tunes allosteric regulation of the ATP-PFK by ATP, fructose 2,6-bisphosphate and AMP. This is ATP-dependent 6-phosphofructokinase subunit gamma (PFK3) from Komagataella pastoris (Yeast).